A 779-amino-acid polypeptide reads, in one-letter code: uncharacterized protein (779 aa).

[4Fe-4S] cluster-binding residues include cysteine 72 and cysteine 75.

It belongs to the prokaryotic molybdopterin-containing oxidoreductase family. [4Fe-4S] cluster serves as cofactor. Requires Mo-bis(molybdopterin guanine dinucleotide) as cofactor.

This is an uncharacterized protein from Mycobacterium bovis (strain ATCC BAA-935 / AF2122/97).